The following is a 216-amino-acid chain: Vascular endothelial growth factor A (216 aa).

A signal peptide spans 1–26 (MNFLLTWIHWGLAALLYFHNAKVLQA). Disulfide bonds link Cys52-Cys94, Cys83-Cys128, and Cys87-Cys130. Asn101 carries an N-linked (GlcNAc...) asparagine glycan. The tract at residues 140–161 (QEKKSKREKGKGQKRKRKRGRY) is disordered. A compositionally biased stretch (basic residues) spans 145 to 161 (KREKGKGQKRKRKRGRY).

It belongs to the PDGF/VEGF growth factor family. Homodimer; disulfide-linked. Also found as heterodimer with PGF. Interacts to the FLT1/VEGFR1 and KDR/VEGFR2 receptors, heparan sulfate and heparin. As to expression, expressed in venom gland, heart, brain, liver, skeletal muscle and kidney.

The protein resides in the secreted. Its function is as follows. Growth factor active in angiogenesis, vasculogenesis and endothelial cell growth. Induces endothelial cell proliferation, promotes cell migration, inhibits apoptosis and induces permeabilization of blood vessels. The polypeptide is Vascular endothelial growth factor A (Protobothrops flavoviridis (Habu)).